The primary structure comprises 525 residues: Glutamate--cysteine ligase (525 aa).

The protein belongs to the glutamate--cysteine ligase type 1 family. Type 1 subfamily.

The catalysed reaction is L-cysteine + L-glutamate + ATP = gamma-L-glutamyl-L-cysteine + ADP + phosphate + H(+). It functions in the pathway sulfur metabolism; glutathione biosynthesis; glutathione from L-cysteine and L-glutamate: step 1/2. The protein is Glutamate--cysteine ligase of Pseudomonas putida (strain W619).